The sequence spans 256 residues: MQIDRLPVLSDNYIFLVLDPERRQAAVVDPAVAAPVLERLRSLQFQLVAIFNTHHHHDHVGGNQELLQHFPTAVVYGGAEDRGRIPGQQVFLQPGDRVNFAQRTAEVLFVPGHTRAHIAYYFPPVNHSSGELFCGDTLFAGGCGRLFEGTPAQMVNSLNQLRQLPDNTRVWCAHEYTLKNLQFALTIEPENVELQTRLAQVYLARQHFQPTVPSELGLEKRTNPFLRWDVPQVQQSVKGQDGIQTFTRLRGRKDQF.

Zn(2+) contacts are provided by histidine 54, histidine 56, aspartate 58, histidine 59, histidine 113, aspartate 136, and histidine 174.

This sequence belongs to the metallo-beta-lactamase superfamily. Glyoxalase II family. Monomer. Zn(2+) is required as a cofactor.

The catalysed reaction is an S-(2-hydroxyacyl)glutathione + H2O = a 2-hydroxy carboxylate + glutathione + H(+). It functions in the pathway secondary metabolite metabolism; methylglyoxal degradation; (R)-lactate from methylglyoxal: step 2/2. Functionally, thiolesterase that catalyzes the hydrolysis of S-D-lactoyl-glutathione to form glutathione and D-lactic acid. The protein is Hydroxyacylglutathione hydrolase of Cyanothece sp. (strain PCC 7425 / ATCC 29141).